We begin with the raw amino-acid sequence, 145 residues long: Large ribosomal subunit protein uL13 (145 aa).

Belongs to the universal ribosomal protein uL13 family. In terms of assembly, part of the 50S ribosomal subunit.

Functionally, this protein is one of the early assembly proteins of the 50S ribosomal subunit, although it is not seen to bind rRNA by itself. It is important during the early stages of 50S assembly. The sequence is that of Large ribosomal subunit protein uL13 from Staphylococcus saprophyticus subsp. saprophyticus (strain ATCC 15305 / DSM 20229 / NCIMB 8711 / NCTC 7292 / S-41).